Reading from the N-terminus, the 2183-residue chain is Genome polyprotein (2183 aa).

Gly-2 is lipidated: N-myristoyl glycine; by host. Over 2-1493 the chain is Cytoplasmic; it reads GAQVSTQKTG…HVSRAFICLQ (1492 aa). Residues 566-582 form an amphipathic alpha-helix region; it reads FYQGPTEESVERAMGRV. Catalysis depends on for protease 2A activity residues His-870 and Asp-888. Zn(2+)-binding residues include Cys-905 and Cys-907. Catalysis depends on Cys-959, which acts as the For protease 2A activity. Zn(2+)-binding residues include Cys-965 and His-967. The membrane-binding stretch occupies residues 1099–1171; sequence NNGWLKKFTE…EQSAPSQSDQ (73 aa). The interval 1099 to 1237 is oligomerization; the sequence is NNGWLKKFTE…SPGAGKSVAT (139 aa). Residues 1120–1124 are RNA-binding; the sequence is AVKIQ. Residues 1203 to 1359 form the SF3 helicase domain; the sequence is EKKMSNYIQF…SMYSQNGKIN (157 aa). Residues Cys-1367, Cys-1379, and Cys-1384 each coordinate Zn(2+). The C4-type; degenerate zinc finger occupies 1367–1384; sequence CDEECCPVNFKRCCPLVC. The tract at residues 1411–1418 is RNA-binding; the sequence is EYNHRHSV. Positions 1422–1427 are oligomerization; that stretch reads LEALFQ. Residues 1494–1509 lie within the membrane without spanning it; the sequence is ALTTFVSVAGIIYIIY. Residues 1510–2183 lie on the Cytoplasmic side of the membrane; that stretch reads KLFAGFQGAY…TLRRKWLDSF (674 aa). O-(5'-phospho-RNA)-tyrosine is present on Tyr-1519. A Peptidase C3 domain is found at 1539-1717; it reads GPAFEFAVAM…FSAGLLKHYF (179 aa). Active-site for protease 3C activity residues include His-1578, Glu-1609, and Cys-1685. A RdRp catalytic domain is found at 1948 to 2064; it reads GHLIAFDYSG…SYPWPIDASL (117 aa). Residues Asp-1954 and Asp-2050 each coordinate Mg(2+).

This sequence belongs to the picornaviruses polyprotein family. Interacts with capsid protein VP1 and capsid protein VP3 to form heterotrimeric protomers. As to quaternary structure, interacts with capsid protein VP0, and capsid protein VP3 to form heterotrimeric protomers. Five protomers subsequently associate to form pentamers which serve as building blocks for the capsid. Interacts with capsid protein VP2, capsid protein VP3 and capsid protein VP4 following cleavage of capsid protein VP0. Interacts with host CXADR. In terms of assembly, interacts with capsid protein VP1 and capsid protein VP3 in the mature capsid. Interacts with capsid protein VP0 and capsid protein VP1 to form heterotrimeric protomers. Five protomers subsequently associate to form pentamers which serve as building blocks for the capsid. Interacts with capsid protein VP4 in the mature capsid. Interacts with protein 2C; this interaction may be important for virion morphogenesis. As to quaternary structure, interacts with capsid protein VP1 and capsid protein VP3. In terms of assembly, homodimer. Homohexamer; forms a hexameric ring structure with 6-fold symmetry characteristic of AAA+ ATPases. Interacts (via N-terminus) with host RTN3 (via reticulon domain); this interaction is important for viral replication. Interacts with capsid protein VP3; this interaction may be important for virion morphogenesis. As to quaternary structure, interacts with protein 3CD. In terms of assembly, homodimer. Interacts with host GBF1. Interacts (via GOLD domain) with host ACBD3 (via GOLD domain); this interaction allows the formation of a viral protein 3A/ACBD3 heterotetramer with a 2:2 stoichiometry, which will stimulate the recruitment of host PI4KB in order to synthesize PI4P at the viral RNA replication sites. Interacts with RNA-directed RNA polymerase. As to quaternary structure, interacts with protein 3AB and with RNA-directed RNA polymerase. In terms of assembly, interacts with Viral protein genome-linked and with protein 3CD. Requires Mg(2+) as cofactor. In terms of processing, specific enzymatic cleavages in vivo by the viral proteases yield processing intermediates and the mature proteins. Myristoylation is required for the formation of pentamers during virus assembly. Further assembly of 12 pentamers and a molecule of genomic RNA generates the provirion. Post-translationally, during virion maturation, immature virions are rendered infectious following cleavage of VP0 into VP4 and VP2. This maturation seems to be an autocatalytic event triggered by the presence of RNA in the capsid and it is followed by a conformational change infectious virion. In terms of processing, myristoylation is required during RNA encapsidation and formation of the mature virus particle. VPg is uridylylated by the polymerase into VPg-pUpU. This acts as a nucleotide-peptide primer for the genomic RNA replication.

It is found in the virion. Its subcellular location is the host cytoplasm. The protein resides in the host cytoplasmic vesicle membrane. It localises to the host nucleus. It catalyses the reaction a ribonucleoside 5'-triphosphate + H2O = a ribonucleoside 5'-diphosphate + phosphate + H(+). It carries out the reaction Selective cleavage of Tyr-|-Gly bond in the picornavirus polyprotein.. The enzyme catalyses RNA(n) + a ribonucleoside 5'-triphosphate = RNA(n+1) + diphosphate. The catalysed reaction is Selective cleavage of Gln-|-Gly bond in the poliovirus polyprotein. In other picornavirus reactions Glu may be substituted for Gln, and Ser or Thr for Gly.. With respect to regulation, replication or transcription is subject to high level of random mutations by the nucleotide analog ribavirin. Forms an icosahedral capsid of pseudo T=3 symmetry with capsid proteins VP2 and VP3. The capsid is 300 Angstroms in diameter, composed of 60 copies of each capsid protein and enclosing the viral positive strand RNA genome. Capsid protein VP1 mainly forms the vertices of the capsid. Capsid protein VP1 interacts with host CXADR to provide virion attachment to target host cells. This attachment induces virion internalization. Tyrosine kinases are probably involved in the entry process. After binding to its receptor, the capsid undergoes conformational changes. Capsid protein VP1 N-terminus (that contains an amphipathic alpha-helix) and capsid protein VP4 are externalized. Together, they shape a pore in the host membrane through which viral genome is translocated to host cell cytoplasm. In terms of biological role, forms an icosahedral capsid of pseudo T=3 symmetry with capsid proteins VP2 and VP3. The capsid is 300 Angstroms in diameter, composed of 60 copies of each capsid protein and enclosing the viral positive strand RNA genome. Functionally, lies on the inner surface of the capsid shell. After binding to the host receptor, the capsid undergoes conformational changes. Capsid protein VP4 is released, Capsid protein VP1 N-terminus is externalized, and together, they shape a pore in the host membrane through which the viral genome is translocated into the host cell cytoplasm. Its function is as follows. Component of immature procapsids, which is cleaved into capsid proteins VP4 and VP2 after maturation. Allows the capsid to remain inactive before the maturation step. Cysteine protease that cleaves viral polyprotein and specific host proteins. It is responsible for the autocatalytic cleavage between the P1 and P2 regions, which is the first cleavage occurring in the polyprotein. Also cleaves the host translation initiation factor EIF4G1, in order to shut down the capped cellular mRNA translation. Inhibits the host nucleus-cytoplasm protein and RNA trafficking by cleaving host members of the nuclear pores. Counteracts stress granule formation probably by antagonizing its assembly or promoting its dissassembly. Cleaves and inhibits host IFIH1/MDA5, thereby inhibiting the type-I IFN production and the establishment of the antiviral state. Cleaves and inhibits host MAVS, thereby inhibiting the type-I IFN production and the establishment of the antiviral state. In terms of biological role, plays an essential role in the virus replication cycle by acting as a viroporin. Creates a pore in the host endoplasmic reticulum and as a consequence releases Ca2+ in the cytoplasm of infected cell. In turn, high levels of cytoplasmic calcium may trigger membrane trafficking and transport of viral ER-associated proteins to viroplasms, sites of viral genome replication. Functionally, induces and associates with structural rearrangements of intracellular membranes. Displays RNA-binding, nucleotide binding and NTPase activities. May play a role in virion morphogenesis and viral RNA encapsidation by interacting with the capsid protein VP3. Its function is as follows. Localizes the viral replication complex to the surface of membranous vesicles. Together with protein 3CD binds the Cis-Active RNA Element (CRE) which is involved in RNA synthesis initiation. Acts as a cofactor to stimulate the activity of 3D polymerase, maybe through a nucleid acid chaperone activity. Localizes the viral replication complex to the surface of membranous vesicles. It inhibits host cell endoplasmic reticulum-to-Golgi apparatus transport and causes the disassembly of the Golgi complex, possibly through GBF1 interaction. This would result in depletion of MHC, trail receptors and IFN receptors at the host cell surface. Plays an essential role in viral RNA replication by recruiting ACBD3 and PI4KB at the viral replication sites, thereby allowing the formation of the rearranged membranous structures where viral replication takes place. In terms of biological role, acts as a primer for viral RNA replication and remains covalently bound to viral genomic RNA. VPg is uridylylated prior to priming replication into VPg-pUpU. The oriI viral genomic sequence may act as a template for this. The VPg-pUpU is then used as primer on the genomic RNA poly(A) by the RNA-dependent RNA polymerase to replicate the viral genome. During genome replication, the VPg-RNA linkage is removed by the host TDP2, thereby accelerating replication. During the late stage of the replication cycle, host TDP2 is excluded from sites of viral RNA synthesis and encapsidation, allowing for the generation of progeny virions. Functionally, involved in the viral replication complex and viral polypeptide maturation. It exhibits protease activity with a specificity and catalytic efficiency that is different from protease 3C. Protein 3CD lacks polymerase activity. Protein 3CD binds to the 5'UTR of the viral genome. Its function is as follows. Replicates the viral genomic RNA on the surface of intracellular membranes. May form linear arrays of subunits that propagate along a strong head-to-tail interaction called interface-I. Covalently attaches UMP to a tyrosine of VPg, which is used to prime RNA synthesis. The positive stranded RNA genome is first replicated at virus induced membranous vesicles, creating a dsRNA genomic replication form. This dsRNA is then used as template to synthesize positive stranded RNA genomes. ss(+)RNA genomes are either translated, replicated or encapsidated. Major viral protease that mediates proteolytic processing of the polyprotein. Cleaves host EIF5B, contributing to host translation shutoff. Also cleaves host PABPC1, contributing to host translation shutoff. Cleaves host NLRP1, triggers host N-glycine-mediated degradation of the autoinhibitory NLRP1 N-terminal fragment. This Coxsackievirus B4 (strain JVB / Benschoten / New York/51) protein is Genome polyprotein.